The primary structure comprises 256 residues: UPF0246 protein Sde_3824 (256 aa).

It belongs to the UPF0246 family.

The polypeptide is UPF0246 protein Sde_3824 (Saccharophagus degradans (strain 2-40 / ATCC 43961 / DSM 17024)).